We begin with the raw amino-acid sequence, 175 residues long: NADH-ubiquinone oxidoreductase chain 6 (175 aa).

Transmembrane regions (helical) follow at residues 1-21 (MMTYIVFILSTIFVISFVGFS), 25-45 (SPIYGGVGLIVSGGVGCGIVM), 47-67 (FGGSFLGLMVFLIYLGGMLVV), 88-108 (VVMGAFISGLIVEVVFVLCVL), and 149-169 (YGVWLVIVTGWSLLIGVIVVL).

This sequence belongs to the complex I subunit 6 family.

The protein localises to the mitochondrion membrane. The catalysed reaction is a ubiquinone + NADH + 5 H(+)(in) = a ubiquinol + NAD(+) + 4 H(+)(out). Functionally, core subunit of the mitochondrial membrane respiratory chain NADH dehydrogenase (Complex I) that is believed to belong to the minimal assembly required for catalysis. Complex I functions in the transfer of electrons from NADH to the respiratory chain. The immediate electron acceptor for the enzyme is believed to be ubiquinone. In Rhinolophus monoceros (Formosan lesser horseshoe bat), this protein is NADH-ubiquinone oxidoreductase chain 6 (MT-ND6).